The following is a 468-amino-acid chain: ATP synthase subunit beta 2 (468 aa).

An ATP-binding site is contributed by 145 to 152 (GGAGVGKT).

This sequence belongs to the ATPase alpha/beta chains family. In terms of assembly, F-type ATPases have 2 components, CF(1) - the catalytic core - and CF(0) - the membrane proton channel. CF(1) has five subunits: alpha(3), beta(3), gamma(1), delta(1), epsilon(1). CF(0) has three main subunits: a(1), b(2) and c(9-12). The alpha and beta chains form an alternating ring which encloses part of the gamma chain. CF(1) is attached to CF(0) by a central stalk formed by the gamma and epsilon chains, while a peripheral stalk is formed by the delta and b chains.

It is found in the cell membrane. The catalysed reaction is ATP + H2O + 4 H(+)(in) = ADP + phosphate + 5 H(+)(out). In terms of biological role, produces ATP from ADP in the presence of a proton gradient across the membrane. The catalytic sites are hosted primarily by the beta subunits. The chain is ATP synthase subunit beta 2 from Mycoplasmopsis pulmonis (strain UAB CTIP) (Mycoplasma pulmonis).